A 200-amino-acid chain; its full sequence is Holliday junction resolvase RecU (200 aa).

4 residues coordinate Mg(2+): T85, D87, E100, and Q119.

The protein belongs to the RecU family. The cofactor is Mg(2+).

It localises to the cytoplasm. The catalysed reaction is Endonucleolytic cleavage at a junction such as a reciprocal single-stranded crossover between two homologous DNA duplexes (Holliday junction).. In terms of biological role, endonuclease that resolves Holliday junction intermediates in genetic recombination. Cleaves mobile four-strand junctions by introducing symmetrical nicks in paired strands. Promotes annealing of linear ssDNA with homologous dsDNA. Required for DNA repair, homologous recombination and chromosome segregation. The sequence is that of Holliday junction resolvase RecU from Bacillus cytotoxicus (strain DSM 22905 / CIP 110041 / 391-98 / NVH 391-98).